The chain runs to 1987 residues: Transcription factor 20 (1987 aa).

Residues 1–22 show a composition bias toward polar residues; that stretch reads MQSFREQSSYHGNQQSYPQEVH. 5 disordered regions span residues 1 to 79, 96 to 432, 446 to 481, 502 to 816, and 844 to 891; these read MQSF…QGYQ, DTVA…GNVP, LSPT…DPGL, LLSD…GTAR, and PHWG…SLSE. Over residues 51 to 74 the composition is skewed to low complexity; the sequence is TGSSSSGRRGTAAAAAAMASETSG. Arginine 59 is modified (omega-N-methylarginine). The span at 121 to 142 shows a compositional bias: polar residues; that stretch reads QGSSFGNQYASEGHVSQFQAQH. The segment covering 163 to 205 has biased composition (low complexity); the sequence is SAQYQQQASSQQQQQQQQQQQQQQQQQQQQVQQLRQQLYQSHQ. The segment covering 206–235 has biased composition (polar residues); it reads PLPQTTGQPASGSSHLQPMQRPSTLPSSAG. The segment covering 248–277 has biased composition (low complexity); that stretch reads QSSASSSSSSSFPSPQRFSQSGQSYDGSYS. Positions 289–311 are enriched in polar residues; the sequence is VGSNAQAYGTQSNYSYQPQSMKN. Residue lysine 316 forms a Glycyl lysine isopeptide (Lys-Gly) (interchain with G-Cter in SUMO2) linkage. The segment covering 322-354 has biased composition (low complexity); sequence QQGQQQQQQQPQPQQQQPQQQQQQQQQQQHPPQ. Over residues 357 to 377 the composition is skewed to polar residues; sequence MQYTNAATKMPLQSQVGQYNQ. Over residues 396-416 the composition is skewed to low complexity; the sequence is SNPSPAASVVQSPSCSSTPSP. Residues 417–432 are compositionally biased toward polar residues; the sequence is LMQSGENLQCGQGNVP. Over residues 446-456 the composition is skewed to low complexity; the sequence is LSPTPSMMPSP. A phosphoserine mark is found at serine 447 and serine 458. 3 stretches are compositionally biased toward polar residues: residues 526-537, 566-576, and 585-605; these read SCTNSEGSSQPE, LSGQSTSSDTT, and AGSS…TSPA. A phosphoserine mark is found at serine 567, serine 588, serine 603, and serine 612. Over residues 618 to 627 the composition is skewed to polar residues; the sequence is TSLSSEGNTK. Residue lysine 631 is modified to N6-acetyllysine. Over residues 645 to 657 the composition is skewed to basic and acidic residues; it reads RVEKSGGQDKGSQ. The segment covering 666–682 has biased composition (polar residues); sequence RPPSNSGVKEISHTSLP. Serine 669 is modified (phosphoserine). Residues 693–715 are compositionally biased toward low complexity; it reads GNKNGDNNSSNHNGEGNGPSSHS. The span at 722–731 shows a compositional bias: polar residues; the sequence is TGRTEPSKSP. Glycyl lysine isopeptide (Lys-Gly) (interchain with G-Cter in SUMO2) cross-links involve residues lysine 739, lysine 762, lysine 777, lysine 852, lysine 861, and lysine 873. Over residues 761 to 777 the composition is skewed to basic and acidic residues; it reads EKGDFGSHGERKGRNEK. Phosphoserine is present on serine 900. Residues lysine 949 and lysine 951 each participate in a glycyl lysine isopeptide (Lys-Gly) (interchain with G-Cter in SUMO2) cross-link. Residues 949–1065 are disordered; that stretch reads KLKSQSGQIK…GDPHHMNPHM (117 aa). Lysine 958 is covalently cross-linked (Glycyl lysine isopeptide (Lys-Gly) (interchain with G-Cter in SUMO1); alternate). A Glycyl lysine isopeptide (Lys-Gly) (interchain with G-Cter in SUMO2); alternate cross-link involves residue lysine 958. Basic and acidic residues predominate over residues 974–989; it reads KSGDHCHPTSIKHETY. A Glycyl lysine isopeptide (Lys-Gly) (interchain with G-Cter in SUMO2) cross-link involves residue lysine 985. Residues serine 994 and serine 1033 each carry the phosphoserine modification. A Glycyl lysine isopeptide (Lys-Gly) (interchain with G-Cter in SUMO2) cross-link involves residue lysine 1043. Arginine 1052 bears the Omega-N-methylarginine mark. At serine 1081 the chain carries Phosphoserine. Residues lysine 1114, lysine 1126, lysine 1165, lysine 1201, lysine 1206, lysine 1211, lysine 1238, lysine 1259, lysine 1295, and lysine 1302 each participate in a glycyl lysine isopeptide (Lys-Gly) (interchain with G-Cter in SUMO2) cross-link. The segment at 1136–1372 is disordered; the sequence is VIAAAQHRQE…SPAKTKILPP (237 aa). A compositionally biased stretch (basic and acidic residues) spans 1158–1170; sequence DRVRSPLKNDKDG. The tract at residues 1198–1219 is leucine-zipper; the sequence is LPAKSMELKHSSQKLQESCWDL. The short motif at 1282–1295 is the Nuclear localization signal element; that stretch reads RRRVRSFISPIPSK. Basic and acidic residues-rich tracts occupy residues 1305–1321 and 1332–1346; these read NADD…EGAD and HSQD…DSSK. A Phosphoserine modification is found at serine 1333. Lysine 1337 is covalently cross-linked (Glycyl lysine isopeptide (Lys-Gly) (interchain with G-Cter in SUMO2)). Serine 1363 carries the phosphoserine modification. Lysine 1366 participates in a covalent cross-link: Glycyl lysine isopeptide (Lys-Gly) (interchain with G-Cter in SUMO2). A Phosphoserine modification is found at serine 1389. The segment at 1415–1434 is disordered; sequence SLKSGPPEGGTVATQEAEME. Residues lysine 1417, lysine 1437, lysine 1456, and lysine 1474 each participate in a glycyl lysine isopeptide (Lys-Gly) (interchain with G-Cter in SUMO2) cross-link. Residues 1446 to 1636 are disordered; the sequence is SVTNQESNVE…KQAVPIVEPQ (191 aa). The segment covering 1463-1479 has biased composition (basic and acidic residues); the sequence is EEWRGSGDDKVKTEAHV. Residues 1481–1501 show a composition bias toward polar residues; sequence TASTGKEPSGTMTSTASQKPG. Residue lysine 1538 forms a Glycyl lysine isopeptide (Lys-Gly) (interchain with G-Cter in SUMO2) linkage. At serine 1550 the chain carries Phosphoserine. Lysine 1552 participates in a covalent cross-link: Glycyl lysine isopeptide (Lys-Gly) (interchain with G-Cter in SUMO2). Positions 1565–1579 form a DNA-binding region, a.T hook; that stretch reads GKKKGRPIGSVNKQK. A compositionally biased stretch (pro residues) spans 1584–1594; the sequence is QPPPPPQPPQM. Residues 1604-1628 carry the Nuclear localization signal motif; the sequence is KPKKQRQRRERRKPGAQPRKRKTKQ. The segment covering 1606–1627 has biased composition (basic residues); sequence KKQRQRRERRKPGAQPRKRKTK. Lysine 1641 participates in a covalent cross-link: Glycyl lysine isopeptide (Lys-Gly) (interchain with G-Cter in SUMO2). 2 disordered regions span residues 1685-1710 and 1760-1865; these read QTKL…SKVL and TLPK…GPEL. At serine 1697 the chain carries Phosphoserine. 3 positions are modified to phosphothreonine: threonine 1699, threonine 1790, and threonine 1792. The Nuclear localization signal signature appears at 1812-1819; that stretch reads RFKRRHRS. Residues 1850–1859 show a composition bias toward polar residues; it reads DTKPSVPTTS. A C2HC pre-PHD-type; degenerate zinc finger spans residues 1856-1892; it reads PTTSEGGPELELQIPELPLDSNEFWVHEGCILWANGI. A PHD-type zinc finger spans residues 1912–1960; that stretch reads MKCSHCQEAGATLGCYNKGCSFRYHYPCAIDADCLLHEENFSVRCPKHK. Residues 1966–1987 form a disordered region; the sequence is PLPPLQNKTAKGSLSTEQSERG. A compositionally biased stretch (polar residues) spans 1971–1987; sequence QNKTAKGSLSTEQSERG.

Homodimer. Interacts with RNF4 and JUN. Binds to the regulatory region of MMP3. Expressed in brain, lung, liver, kidney and testes.

Its subcellular location is the nucleus. Functionally, transcriptional activator that binds to the regulatory region of MMP3 and thereby controls stromelysin expression. It stimulates the activity of various transcriptional activators such as JUN, SP1, PAX6 and ETS1, suggesting a function as a coactivator. In Mus musculus (Mouse), this protein is Transcription factor 20 (Tcf20).